Reading from the N-terminus, the 813-residue chain is LPS-assembly protein LptD (813 aa).

An N-terminal signal peptide occupies residues 1–22 (MRRALRLLPLPLSIAICLPAMA).

This sequence belongs to the LptD family. As to quaternary structure, component of the lipopolysaccharide transport and assembly complex. Interacts with LptE and LptA.

Its subcellular location is the cell outer membrane. Functionally, together with LptE, is involved in the assembly of lipopolysaccharide (LPS) at the surface of the outer membrane. The chain is LPS-assembly protein LptD from Xanthomonas oryzae pv. oryzae (strain KACC10331 / KXO85).